The chain runs to 251 residues: Insertion sequence IS5376 putative ATP-binding protein (251 aa).

Gly-105–Thr-112 is a binding site for ATP.

It belongs to the IS21/IS1162 putative ATP-binding protein family.

The protein is Insertion sequence IS5376 putative ATP-binding protein of Geobacillus stearothermophilus (Bacillus stearothermophilus).